Consider the following 233-residue polypeptide: Large ribosomal subunit protein uL1 (233 aa).

The protein belongs to the universal ribosomal protein uL1 family. Part of the 50S ribosomal subunit.

In terms of biological role, binds directly to 23S rRNA. The L1 stalk is quite mobile in the ribosome, and is involved in E site tRNA release. Functionally, protein L1 is also a translational repressor protein, it controls the translation of the L11 operon by binding to its mRNA. This Shewanella pealeana (strain ATCC 700345 / ANG-SQ1) protein is Large ribosomal subunit protein uL1.